Consider the following 231-residue polypeptide: MGHKIHPKSIRLGYIKDWESKWFNLKEMPNFIEEDYRIRVYLKNRLKLASVSKIVIERPGKYLRVSIYTARPGIVIGKGGQGIESLRKEIETMTAKKTFVNIMEIKRPEIDAQLASENIAFQLEKQIAFRRVMKRTIEKAMMSGVQGIKVMVSGRLGGAEIARTEWLKEGRIPLQTFRADIDYGFSEACTPMGHIGVKVWIFKKEFFKKTAKELAEDAKVVVDLDTAAKQG.

Residues 38–106 (IRVYLKNRLK…KTFVNIMEIK (69 aa)) enclose the KH type-2 domain.

The protein belongs to the universal ribosomal protein uS3 family. Part of the 30S ribosomal subunit. Forms a tight complex with proteins S10 and S14.

Binds the lower part of the 30S subunit head. Binds mRNA in the 70S ribosome, positioning it for translation. The polypeptide is Small ribosomal subunit protein uS3 (Endomicrobium trichonymphae).